Consider the following 440-residue polypeptide: Proline--tRNA ligase (440 aa).

This sequence belongs to the class-II aminoacyl-tRNA synthetase family. ProS type 2 subfamily. Homodimer.

The protein resides in the cytoplasm. It catalyses the reaction tRNA(Pro) + L-proline + ATP = L-prolyl-tRNA(Pro) + AMP + diphosphate. Its function is as follows. Catalyzes the attachment of proline to tRNA(Pro) in a two-step reaction: proline is first activated by ATP to form Pro-AMP and then transferred to the acceptor end of tRNA(Pro). The protein is Proline--tRNA ligase of Rhizobium leguminosarum bv. trifolii (strain WSM2304).